Here is a 358-residue protein sequence, read N- to C-terminus: Golgi-resident adenosine 3',5'-bisphosphate 3'-phosphatase (358 aa).

Met1 bears the N-acetylmethionine mark. At 1-12 (MAPMGIRLSPLG) the chain is on the cytoplasmic side. The helical transmembrane segment at 13-33 (VAVFCLLGLGVLYHLYSGFLA) threads the bilayer. Topologically, residues 34–358 (GRFSLFGLGG…KLPDLEKMGH (325 aa)) are lumenal. The interval 85 to 106 (RESNVLHEKSKGKTREGADDKM) is disordered. Asp110 serves as the catalytic Proton acceptor. 4 residues coordinate Mg(2+): Glu133, Asp174, Leu176, and Asp177. Catalysis depends on Thr179, which acts as the Proton acceptor. AMP is bound by residues Ser242 and His245. A glycan (N-linked (GlcNAc...) asparagine) is linked at Asn259. AMP is bound by residues Gly268 and Lys272. Asp300 is a Mg(2+) binding site.

This sequence belongs to the inositol monophosphatase superfamily. The cofactor is Mg(2+). Post-translationally, contains N-linked glycan resistant to endoglycosydase H.

The protein resides in the golgi apparatus. The protein localises to the trans-Golgi network membrane. The enzyme catalyses adenosine 3',5'-bisphosphate + H2O = AMP + phosphate. Its pathway is sulfur metabolism. Its activity is regulated as follows. Strongly inhibited by lithium. Functionally, exhibits 3'-nucleotidase activity toward adenosine 3',5'-bisphosphate (PAP), namely hydrolyzes adenosine 3',5'-bisphosphate into adenosine 5'-monophosphate (AMP) and a phosphate. May play a role in the formation of skeletal elements derived through endochondral ossification, possibly by clearing adenosine 3',5'-bisphosphate produced by Golgi sulfotransferases during glycosaminoglycan sulfation. Has no activity toward 3'-phosphoadenosine 5'-phosphosulfate (PAPS) or inositol phosphate (IP) substrates including I(1)P, I(1,4)P2, I(1,3,4)P3, I(1,4,5)P3 and I(1,3,4,5)P4. The polypeptide is Golgi-resident adenosine 3',5'-bisphosphate 3'-phosphatase (BPNT2) (Callithrix jacchus (White-tufted-ear marmoset)).